A 104-amino-acid polypeptide reads, in one-letter code: Large ribosomal subunit protein uL24 (104 aa).

The protein belongs to the universal ribosomal protein uL24 family. As to quaternary structure, part of the 50S ribosomal subunit.

Functionally, one of two assembly initiator proteins, it binds directly to the 5'-end of the 23S rRNA, where it nucleates assembly of the 50S subunit. Its function is as follows. One of the proteins that surrounds the polypeptide exit tunnel on the outside of the subunit. The polypeptide is Large ribosomal subunit protein uL24 (Buchnera aphidicola subsp. Acyrthosiphon pisum (strain 5A)).